A 164-amino-acid polypeptide reads, in one-letter code: Ribosome-binding factor A (164 aa).

It belongs to the RbfA family. In terms of assembly, monomer. Binds 30S ribosomal subunits, but not 50S ribosomal subunits or 70S ribosomes.

It is found in the cytoplasm. Functionally, one of several proteins that assist in the late maturation steps of the functional core of the 30S ribosomal subunit. Associates with free 30S ribosomal subunits (but not with 30S subunits that are part of 70S ribosomes or polysomes). Required for efficient processing of 16S rRNA. May interact with the 5'-terminal helix region of 16S rRNA. This Caulobacter sp. (strain K31) protein is Ribosome-binding factor A.